We begin with the raw amino-acid sequence, 323 residues long: NADH-cytochrome b5 reductase 2 (323 aa).

Residues 30-46 (LAPIYTAVGLTGLSVGL) traverse the membrane as a helical segment. Residues 72 to 177 (QGWVDLKLSE…KGPLPKYQWE (106 aa)) enclose the FAD-binding FR-type domain. 180–215 (KHEHIALIAGGTGITPMYQLIRQIFKNPDDKTKVTL) contacts FAD.

The protein belongs to the flavoprotein pyridine nucleotide cytochrome reductase family. Requires FAD as cofactor.

It is found in the mitochondrion outer membrane. The catalysed reaction is 2 Fe(III)-[cytochrome b5] + NADH = 2 Fe(II)-[cytochrome b5] + NAD(+) + H(+). Functionally, may mediate the reduction of outer membrane cytochrome b5. The chain is NADH-cytochrome b5 reductase 2 (mcr1) from Aspergillus oryzae (strain ATCC 42149 / RIB 40) (Yellow koji mold).